Reading from the N-terminus, the 501-residue chain is Glycerol kinase (501 aa).

Thr-14 is a binding site for ADP. Thr-14, Thr-15, and Ser-16 together coordinate ATP. Residue Thr-14 coordinates sn-glycerol 3-phosphate. Arg-18 contacts ADP. The sn-glycerol 3-phosphate site is built by Arg-84, Glu-85, Tyr-136, and Asp-246. Glycerol is bound by residues Arg-84, Glu-85, Tyr-136, Asp-246, and Gln-247. Residues Thr-268 and Gly-311 each coordinate ADP. 4 residues coordinate ATP: Thr-268, Gly-311, Gln-315, and Gly-412. 2 residues coordinate ADP: Gly-412 and Asn-416.

The protein belongs to the FGGY kinase family. In terms of assembly, homotetramer and homodimer (in equilibrium).

The enzyme catalyses glycerol + ATP = sn-glycerol 3-phosphate + ADP + H(+). Its pathway is polyol metabolism; glycerol degradation via glycerol kinase pathway; sn-glycerol 3-phosphate from glycerol: step 1/1. Its activity is regulated as follows. Activated by phosphorylation and inhibited by fructose 1,6-bisphosphate (FBP). Its function is as follows. Key enzyme in the regulation of glycerol uptake and metabolism. Catalyzes the phosphorylation of glycerol to yield sn-glycerol 3-phosphate. This is Glycerol kinase from Desulforamulus reducens (strain ATCC BAA-1160 / DSM 100696 / MI-1) (Desulfotomaculum reducens).